The following is a 230-amino-acid chain: MKQLEELLSTSFDIQFNDLTLLETAFTHTSYANEHRLLNVSHNERLEFLGDAVLQLIISEYLFAKYPKKTEGDMSKLRSMIVREESLAGFSRFCSFDAYIKLGKGEEKSGGRRRDTILGDLFEAFLGALLLDKGIDAVRRFLKQVMIPQVEKGNFERVKDYKTCLQEFLQAKGDVVIDYQVISEKGPAHAKQFEVSIVVNGAVLSKGLGKSKKLAEQDAAKNALAQLSEV.

One can recognise an RNase III domain in the interval 1–134 (MKQLEELLST…FLGALLLDKG (134 aa)). Glu-47 contributes to the Mg(2+) binding site. Asp-51 is an active-site residue. Asp-120 and Glu-123 together coordinate Mg(2+). The active site involves Glu-123. The DRBM domain maps to 160-229 (DYKTCLQEFL…AKNALAQLSE (70 aa)).

This sequence belongs to the ribonuclease III family. Homodimer. Requires Mg(2+) as cofactor.

The protein resides in the cytoplasm. The enzyme catalyses Endonucleolytic cleavage to 5'-phosphomonoester.. In terms of biological role, digests double-stranded RNA. Involved in the processing of primary rRNA transcript to yield the immediate precursors to the large and small rRNAs (23S and 16S). Processes some mRNAs, and tRNAs when they are encoded in the rRNA operon. Processes pre-crRNA and tracrRNA of type II CRISPR loci if present in the organism. The chain is Ribonuclease 3 from Streptococcus pyogenes serotype M2 (strain MGAS10270).